The following is a 451-amino-acid chain: Tubulin alpha-1B chain (451 aa).

An MREC motif motif is present at residues 1–4 (MREC). Gly-10, Gln-11, Ala-12, and Gln-15 together coordinate GTP. Residue Lys-40 is modified to N6,N6,N6-trimethyllysine; alternate. Lys-40 is subject to N6-acetyllysine; alternate. Residue Ser-48 is modified to Phosphoserine. GTP contacts are provided by Glu-71, Ala-99, Ser-140, Gly-143, Gly-144, Thr-145, Gly-146, Thr-179, Glu-183, Asn-206, Tyr-224, and Asn-228. Glu-71 contacts Mg(2+). Ser-232 carries the post-translational modification Phosphoserine. GTP is bound at residue Leu-252. The active site involves Glu-254. Tyr-282 carries the 3'-nitrotyrosine modification. Residue Lys-326 forms a Glycyl lysine isopeptide (Lys-Gly) (interchain with G-Cter in ubiquitin) linkage. At Arg-339 the chain carries Omega-N-methylarginine. Residue Lys-370 forms a Glycyl lysine isopeptide (Lys-Gly) (interchain with G-Cter in ubiquitin) linkage. Ser-439 carries the phosphoserine modification. 2 positions are modified to 5-glutamyl polyglutamate: Glu-443 and Glu-445. Tyr-451 bears the 3'-nitrotyrosine mark.

Belongs to the tubulin family. In terms of assembly, heterodimer of alpha- and beta-tubulin. A typical microtubule is a hollow water-filled tube with an outer diameter of 25 nm and an inner diameter of 15 nM. Alpha-beta heterodimers associate head-to-tail to form protofilaments running lengthwise along the microtubule wall with the beta-tubulin subunit facing the microtubule plus end conferring a structural polarity. Microtubules usually have 13 protofilaments but different protofilament numbers can be found in some organisms and specialized cells. Interacts with gamma-tubulin; the interaction allows microtubules to nucleate from the gamma-tubulin ring complex (gTuRC). Nascent microtubule interacts (via alpha-tubulin MREC motif) with TTC5/STRAP; this interaction may result in tubulin mRNA-targeted degradation. Component of sperm flagellar doublet microtubules. The cofactor is Mg(2+). Post-translationally, some glutamate residues at the C-terminus are polyglycylated, resulting in polyglycine chains on the gamma-carboxyl group. Glycylation is mainly limited to tubulin incorporated into axonemes (cilia and flagella) whereas glutamylation is prevalent in neuronal cells, centrioles, axonemes, and the mitotic spindle. Both modifications can coexist on the same protein on adjacent residues, and lowering polyglycylation levels increases polyglutamylation, and reciprocally. Cilia and flagella glycylation is required for their stability and maintenance. Flagella glycylation controls sperm motility. Some glutamate residues at the C-terminus are polyglutamylated, resulting in polyglutamate chains on the gamma-carboxyl group. Polyglutamylation plays a key role in microtubule severing by spastin (SPAST). SPAST preferentially recognizes and acts on microtubules decorated with short polyglutamate tails: severing activity by SPAST increases as the number of glutamates per tubulin rises from one to eight, but decreases beyond this glutamylation threshold. Glutamylation is also involved in cilia motility. In terms of processing, acetylation of alpha chains at Lys-40 is located inside the microtubule lumen. This modification has been correlated with increased microtubule stability, intracellular transport and ciliary assembly. Post-translationally, methylation of alpha chains at Lys-40 is found in mitotic microtubules and is required for normal mitosis and cytokinesis contributing to genomic stability. Nitration of Tyr-451 is irreversible and interferes with normal dynein intracellular distribution. In terms of processing, undergoes a tyrosination/detyrosination cycle, the cyclic removal and re-addition of a C-terminal tyrosine residue by the enzymes tubulin tyrosine carboxypeptidase (MATCAP1, VASH1 or VASH2) and tubulin tyrosine ligase (TTL), respectively. Post-translationally, tyrosination promotes microtubule interaction with CAP-Gly domain-containing proteins such as CLIP1, CLIP2 and DCTN1. Tyrosination regulates the initiation of dynein-dynactin motility via interaction with DCTN1, which brings the dynein-dynactin complex into contact with microtubules. In neurons, tyrosinated tubulins mediate the initiation of retrograde vesicle transport. Detyrosination is involved in metaphase plate congression by guiding chromosomes during mitosis: detyrosination promotes interaction with CENPE, promoting pole-proximal transport of chromosomes toward the equator. Detyrosination increases microtubules-dependent mechanotransduction in dystrophic cardiac and skeletal muscle. In cardiomyocytes, detyrosinated microtubules are required to resist to contractile compression during contraction: detyrosination promotes association with desmin (DES) at force-generating sarcomeres, leading to buckled microtubules and mechanical resistance to contraction.

The protein localises to the cytoplasm. Its subcellular location is the cytoskeleton. The enzyme catalyses GTP + H2O = GDP + phosphate + H(+). Its function is as follows. Tubulin is the major constituent of microtubules, protein filaments consisting of alpha- and beta-tubulin heterodimers. Microtubules grow by the addition of GTP-tubulin dimers to the microtubule end, where a stabilizing cap forms. Below the cap, tubulin dimers are in GDP-bound state, owing to GTPase activity of alpha-tubulin. This chain is Tubulin alpha-1B chain (TUBA1B), found in Pan troglodytes (Chimpanzee).